A 238-amino-acid chain; its full sequence is Ribonuclease 3 (238 aa).

The region spanning 9–141 (LIDFMEKIGY…VVAAVYIDGG (133 aa)) is the RNase III domain. Residue E54 coordinates Mg(2+). D58 is a catalytic residue. Mg(2+) contacts are provided by D127 and E130. The active site involves E130. In terms of domain architecture, DRBM spans 168 to 237 (DYKTSLQEIT…ARRAIEKLKG (70 aa)).

It belongs to the ribonuclease III family. Homodimer. Mg(2+) serves as cofactor.

The protein resides in the cytoplasm. The catalysed reaction is Endonucleolytic cleavage to 5'-phosphomonoester.. Its function is as follows. Digests double-stranded RNA. Involved in the processing of primary rRNA transcript to yield the immediate precursors to the large and small rRNAs (23S and 16S). Processes some mRNAs, and tRNAs when they are encoded in the rRNA operon. Processes pre-crRNA and tracrRNA of type II CRISPR loci if present in the organism. This Pseudothermotoga lettingae (strain ATCC BAA-301 / DSM 14385 / NBRC 107922 / TMO) (Thermotoga lettingae) protein is Ribonuclease 3.